We begin with the raw amino-acid sequence, 556 residues long: Urocanate hydratase (556 aa).

Residues 52 to 53, Gln-130, 176 to 178, Glu-196, Arg-201, 242 to 243, 263 to 267, 273 to 274, and Tyr-322 each bind NAD(+); these read GG, GMG, NA, QTSAH, and YL. Residue Cys-410 is part of the active site. Position 492 (Gly-492) interacts with NAD(+).

Belongs to the urocanase family. NAD(+) serves as cofactor.

The protein localises to the cytoplasm. The catalysed reaction is 4-imidazolone-5-propanoate = trans-urocanate + H2O. Its pathway is amino-acid degradation; L-histidine degradation into L-glutamate; N-formimidoyl-L-glutamate from L-histidine: step 2/3. Functionally, catalyzes the conversion of urocanate to 4-imidazolone-5-propionate. This chain is Urocanate hydratase, found in Bradyrhizobium diazoefficiens (strain JCM 10833 / BCRC 13528 / IAM 13628 / NBRC 14792 / USDA 110).